We begin with the raw amino-acid sequence, 182 residues long: MQTEHVILLNAQGVPTGTLEKYAAHTADTLLHLAFSSWLFNAKGQLLVTRRALSKKAWPGVWTNSVCGHPQLGESSEDAVIRRCRYELGVEITPPESIYPDFRYRATDPRGIVENEVCPVFAARTTSALQINDDEVMDYQWCDLADVLRGIDATPWAFSPWMVMQATNREARIRLSAFTQLK.

Mn(2+) contacts are provided by histidine 25 and histidine 32. The Nudix hydrolase domain maps to 30–164 (LLHLAFSSWL…PWAFSPWMVM (135 aa)). Residue cysteine 67 is part of the active site. Residue histidine 69 coordinates Mn(2+). A Mg(2+)-binding site is contributed by glutamate 87. 2 residues coordinate Mn(2+): glutamate 114 and glutamate 116. Residue glutamate 116 is part of the active site.

This sequence belongs to the IPP isomerase type 1 family. As to quaternary structure, homodimer. Mg(2+) serves as cofactor. It depends on Mn(2+) as a cofactor.

Its subcellular location is the cytoplasm. The catalysed reaction is isopentenyl diphosphate = dimethylallyl diphosphate. It participates in isoprenoid biosynthesis; dimethylallyl diphosphate biosynthesis; dimethylallyl diphosphate from isopentenyl diphosphate: step 1/1. Its function is as follows. Catalyzes the 1,3-allylic rearrangement of the homoallylic substrate isopentenyl (IPP) to its highly electrophilic allylic isomer, dimethylallyl diphosphate (DMAPP). In Shigella flexneri serotype 5b (strain 8401), this protein is Isopentenyl-diphosphate Delta-isomerase.